Reading from the N-terminus, the 400-residue chain is Argininosuccinate synthase (400 aa).

ATP-binding positions include 10–18 (AYSGGVDTS) and alanine 38. Tyrosine 89 provides a ligand contact to L-citrulline. Glycine 119 is an ATP binding site. Residues threonine 121, asparagine 125, and aspartate 126 each contribute to the L-aspartate site. Asparagine 125 contacts L-citrulline. L-citrulline is bound by residues arginine 129, serine 177, serine 186, glutamate 262, and tyrosine 274.

This sequence belongs to the argininosuccinate synthase family. Type 1 subfamily. Homotetramer.

The protein localises to the cytoplasm. It carries out the reaction L-citrulline + L-aspartate + ATP = 2-(N(omega)-L-arginino)succinate + AMP + diphosphate + H(+). Its pathway is amino-acid biosynthesis; L-arginine biosynthesis; L-arginine from L-ornithine and carbamoyl phosphate: step 2/3. This Crocosphaera subtropica (strain ATCC 51142 / BH68) (Cyanothece sp. (strain ATCC 51142)) protein is Argininosuccinate synthase.